A 159-amino-acid polypeptide reads, in one-letter code: uncharacterized protein (159 aa).

3 helical membrane passes run 16–36, 84–104, and 112–132; these read IVLPLVQIIHVSGHSFMAFIF, VYAGGCLFNLITIFAINLLII, and VFFYQFVYFSTYYVFFALLPV.

The protein localises to the cell membrane. This is an uncharacterized protein from Bacillus subtilis (strain 168).